A 360-amino-acid polypeptide reads, in one-letter code: Phospho-N-acetylmuramoyl-pentapeptide-transferase (360 aa).

The next 10 membrane-spanning stretches (helical) occupy residues 27-47, 73-93, 94-114, 132-152, 168-188, 199-219, 236-256, 263-283, 288-308, and 338-358; these read IVSL…MIAW, TMGG…WANL, SNPY…VGFV, WKYF…YAIG, VMPQ…VGTS, GLAI…AWAT, ASEL…FLWF, VFMG…IAVL, FLLV…ILQV, and VIVR…ATLK.

The protein belongs to the glycosyltransferase 4 family. MraY subfamily. It depends on Mg(2+) as a cofactor.

The protein localises to the cell inner membrane. The enzyme catalyses UDP-N-acetyl-alpha-D-muramoyl-L-alanyl-gamma-D-glutamyl-meso-2,6-diaminopimeloyl-D-alanyl-D-alanine + di-trans,octa-cis-undecaprenyl phosphate = di-trans,octa-cis-undecaprenyl diphospho-N-acetyl-alpha-D-muramoyl-L-alanyl-D-glutamyl-meso-2,6-diaminopimeloyl-D-alanyl-D-alanine + UMP. It participates in cell wall biogenesis; peptidoglycan biosynthesis. Its function is as follows. Catalyzes the initial step of the lipid cycle reactions in the biosynthesis of the cell wall peptidoglycan: transfers peptidoglycan precursor phospho-MurNAc-pentapeptide from UDP-MurNAc-pentapeptide onto the lipid carrier undecaprenyl phosphate, yielding undecaprenyl-pyrophosphoryl-MurNAc-pentapeptide, known as lipid I. This is Phospho-N-acetylmuramoyl-pentapeptide-transferase from Pectobacterium carotovorum subsp. carotovorum (strain PC1).